Consider the following 274-residue polypeptide: Dermonecrotic toxin SdSicTox-betaIIB1bii (274 aa).

The active site involves His5. Positions 25 and 27 each coordinate Mg(2+). Catalysis depends on His41, which acts as the Nucleophile. 2 cysteine pairs are disulfide-bonded: Cys45-Cys51 and Cys47-Cys190. Asp85 serves as a coordination point for Mg(2+).

The protein belongs to the arthropod phospholipase D family. Class II subfamily. The cofactor is Mg(2+). As to expression, expressed by the venom gland.

It localises to the secreted. The enzyme catalyses an N-(acyl)-sphingosylphosphocholine = an N-(acyl)-sphingosyl-1,3-cyclic phosphate + choline. It catalyses the reaction an N-(acyl)-sphingosylphosphoethanolamine = an N-(acyl)-sphingosyl-1,3-cyclic phosphate + ethanolamine. The catalysed reaction is a 1-acyl-sn-glycero-3-phosphocholine = a 1-acyl-sn-glycero-2,3-cyclic phosphate + choline. It carries out the reaction a 1-acyl-sn-glycero-3-phosphoethanolamine = a 1-acyl-sn-glycero-2,3-cyclic phosphate + ethanolamine. Its function is as follows. Dermonecrotic toxins cleave the phosphodiester linkage between the phosphate and headgroup of certain phospholipids (sphingolipid and lysolipid substrates), forming an alcohol (often choline) and a cyclic phosphate. This toxin acts on sphingomyelin (SM). It may also act on ceramide phosphoethanolamine (CPE), lysophosphatidylcholine (LPC) and lysophosphatidylethanolamine (LPE), but not on lysophosphatidylserine (LPS), and lysophosphatidylglycerol (LPG). It acts by transphosphatidylation, releasing exclusively cyclic phosphate products as second products. Induces dermonecrosis, hemolysis, increased vascular permeability, edema, inflammatory response, and platelet aggregation. This chain is Dermonecrotic toxin SdSicTox-betaIIB1bii, found in Sicarius cf. damarensis (strain GJB-2008) (Six-eyed sand spider).